We begin with the raw amino-acid sequence, 788 residues long: Endonuclease MutS2 (788 aa).

An ATP-binding site is contributed by 332 to 339 (GPNTGGKT). The Smr domain occupies 713–788 (VDLRGMDAEE…GTGVTVVEIK (76 aa)).

This sequence belongs to the DNA mismatch repair MutS family. MutS2 subfamily. In terms of assembly, homodimer. Binds to stalled ribosomes, contacting rRNA.

Its function is as follows. Endonuclease that is involved in the suppression of homologous recombination and thus may have a key role in the control of bacterial genetic diversity. Acts as a ribosome collision sensor, splitting the ribosome into its 2 subunits. Detects stalled/collided 70S ribosomes which it binds and splits by an ATP-hydrolysis driven conformational change. Acts upstream of the ribosome quality control system (RQC), a ribosome-associated complex that mediates the extraction of incompletely synthesized nascent chains from stalled ribosomes and their subsequent degradation. Probably generates substrates for RQC. The chain is Endonuclease MutS2 from Clostridium botulinum (strain Loch Maree / Type A3).